Consider the following 425-residue polypeptide: Terminal nucleotidyltransferase 5B (425 aa).

The interval 1-42 (MMPSESGAERRDRAAAQVGTAAATAVATAAPAGGGPDPEALS) is disordered. Over residues 15–31 (AAQVGTAAATAVATAAP) the composition is skewed to low complexity.

It belongs to the TENT family.

It is found in the cytoplasm. The protein localises to the nucleus. The catalysed reaction is RNA(n) + ATP = RNA(n)-3'-adenine ribonucleotide + diphosphate. Functionally, catalyzes the transfer of one adenosine molecule from an ATP to an mRNA poly(A) tail bearing a 3'-OH terminal group in an ATP hydrolysis-dependent manner. May be involved in maintaining the translation efficiency of at least some genes through preventing degradation of their mRNAs. Prefers RNA molecules that are adenosine-rich close to 3'-end. In addition, may inhibit cell proliferation and cell cycle progression through ubiquitination of beta-catenin/CTNNB1. This chain is Terminal nucleotidyltransferase 5B, found in Homo sapiens (Human).